The primary structure comprises 248 residues: E3 ubiquitin-protein ligase BIG BROTHER (248 aa).

Residues 197 to 238 form an RING-type; atypical zinc finger; that stretch reads CVICQLKYKIGERQMNLPCKHVYHSECISKWLSINKVCPVCN.

As to quaternary structure, interacts with the E2 ubiquitin conjugating enzyme UBC10 via the RING domain. Interacts with DA1. Post-translationally, auto-ubiquitinated. As to expression, mostly expressed in inflorescence, and, to a lower extent, in seedlings, roots, stems, leaves and siliques.

It catalyses the reaction S-ubiquitinyl-[E2 ubiquitin-conjugating enzyme]-L-cysteine + [acceptor protein]-L-lysine = [E2 ubiquitin-conjugating enzyme]-L-cysteine + N(6)-ubiquitinyl-[acceptor protein]-L-lysine.. It functions in the pathway protein modification; protein ubiquitination. In terms of biological role, E3 ubiquitin-protein ligase that limits organ size, and possibly seed size, in a dose-dependent manner. Negatively regulates the duration of cell proliferation in leaves and petals independently of the major phytohormones (e.g. auxin, cytokinin, gibberellin, brassinosteroids, ethylene, abscisic acid, jasmonic acid), probably by targeting growth stimulators for degradation. Limits the proliferation of root meristematic cells. Polyubiquitinates DA1. Involved in the promotion of leaf senescence, in addition to its function in restricting plant growth. Possesses E3 ubiquitin-protein ligase activity in vitro. This Arabidopsis thaliana (Mouse-ear cress) protein is E3 ubiquitin-protein ligase BIG BROTHER (BB).